The following is a 304-amino-acid chain: 33 kDa chaperonin (304 aa).

2 disulfide bridges follow: Cys-236–Cys-238 and Cys-269–Cys-272.

It belongs to the HSP33 family. In terms of processing, under oxidizing conditions two disulfide bonds are formed involving the reactive cysteines. Under reducing conditions zinc is bound to the reactive cysteines and the protein is inactive.

Its subcellular location is the cytoplasm. Functionally, redox regulated molecular chaperone. Protects both thermally unfolding and oxidatively damaged proteins from irreversible aggregation. Plays an important role in the bacterial defense system toward oxidative stress. The chain is 33 kDa chaperonin from Pelobacter propionicus (strain DSM 2379 / NBRC 103807 / OttBd1).